The sequence spans 149 residues: Large ribosomal subunit protein bL9 (149 aa).

This sequence belongs to the bacterial ribosomal protein bL9 family.

Functionally, binds to the 23S rRNA. The protein is Large ribosomal subunit protein bL9 of Legionella pneumophila (strain Paris).